A 290-amino-acid chain; its full sequence is Lipoyl synthase 2 (290 aa).

7 residues coordinate [4Fe-4S] cluster: C37, C42, C48, C63, C67, C70, and S283. The 224-residue stretch at 49–272 (YGQKTATFLL…GNIARELGFS (224 aa)) folds into the Radical SAM core domain.

It belongs to the radical SAM superfamily. Lipoyl synthase family. It depends on [4Fe-4S] cluster as a cofactor.

It is found in the cytoplasm. The enzyme catalyses [[Fe-S] cluster scaffold protein carrying a second [4Fe-4S](2+) cluster] + N(6)-octanoyl-L-lysyl-[protein] + 2 oxidized [2Fe-2S]-[ferredoxin] + 2 S-adenosyl-L-methionine + 4 H(+) = [[Fe-S] cluster scaffold protein] + N(6)-[(R)-dihydrolipoyl]-L-lysyl-[protein] + 4 Fe(3+) + 2 hydrogen sulfide + 2 5'-deoxyadenosine + 2 L-methionine + 2 reduced [2Fe-2S]-[ferredoxin]. It participates in protein modification; protein lipoylation via endogenous pathway; protein N(6)-(lipoyl)lysine from octanoyl-[acyl-carrier-protein]: step 2/2. Catalyzes the radical-mediated insertion of two sulfur atoms into the C-6 and C-8 positions of the octanoyl moiety bound to the lipoyl domains of lipoate-dependent enzymes, thereby converting the octanoylated domains into lipoylated derivatives. The chain is Lipoyl synthase 2 from Thermosynechococcus vestitus (strain NIES-2133 / IAM M-273 / BP-1).